The chain runs to 345 residues: N(4)-(Beta-N-acetylglucosaminyl)-L-asparaginase (345 aa).

Residues 1–23 form the signal peptide; sequence MARKWNLPFLLLPLVLGIPLVRG. Asn-38 carries N-linked (GlcNAc...) asparagine glycosylation. Cys-64 and Cys-69 are oxidised to a cystine. Asn-149 carries an N-linked (GlcNAc...) asparagine glycan. Cys-163 and Cys-179 are oxidised to a cystine. Residue Thr-205 is the Nucleophile of the active site. Substrate is bound by residues 233–236 and 256–259; these read RVGD and TGDG. Cys-285 and Cys-305 are joined by a disulfide. Asn-307 carries N-linked (GlcNAc...) asparagine glycosylation. An intrachain disulfide couples Cys-316 to Cys-344.

It belongs to the Ntn-hydrolase family. Heterotetramer of two alpha and two beta chains arranged as a dimer of alpha/beta heterodimers. Post-translationally, N-glycosylated. Cleaved into an alpha and beta chain by autocatalysis; this activates the enzyme. The N-terminal residue of the beta subunit is responsible for the nucleophile hydrolase activity.

The protein localises to the lysosome. The enzyme catalyses N(4)-(beta-N-acetyl-D-glucosaminyl)-L-asparagine + H2O = N-acetyl-beta-D-glucosaminylamine + L-aspartate + H(+). Its function is as follows. Cleaves the GlcNAc-Asn bond which joins oligosaccharides to the peptide of asparagine-linked glycoproteins. The chain is N(4)-(Beta-N-acetylglucosaminyl)-L-asparaginase (Aga) from Rattus norvegicus (Rat).